The following is a 753-amino-acid chain: MGEHSPDNNIIYFEAEEDELTPDDKMLRFVDKNGLVPSSSGTVYDRTTVLIEQDPGTLEDEDDDGQCGEHLPFLVGGEEGFHLIDHEAMSQGYVQHIISPDQIHLTINPGSTPMPRNIEGATLTLQSECPETKRKEVKRYQCTFEGCPRTYSTAGNLRTHQKTHRGEYTFVCNQEGCGKAFLTSYSLRIHVRVHTKEKPFECDVQGCEKAFNTLYRLKAHQRLHTGKTFNCESEGCSKYFTTLSDLRKHIRTHTGEKPFRCDHDGCGKAFAASHHLKTHVRTHTGERPFFCPSNGCEKTFSTQYSLKSHMKGHDNKGHSYNALPQHNGSEDTNHSLCLSDLSLLSTDSELRENSSTTQGQDLSTISPAIIFESMFQNSDDTAIQEDPQQTASLTESFNGDAESVSDVPPSTGNSASLSLPLVLQPGLSEPPQPLLPASAPSAPPPAPSLGPGSQQAAFGNPPALLQPPEVPVPHSTQFAANHQEFLPHPQAPQPIVPGLSVVAGASASAAAVASAVAAPAPPQSTTEPLPAMVQTLPLGANSVLTNNPTITITPTPNTAILQSSLVMGEQNLQWILNGATSSPQNQEQIQQASKVEKVFFTTAVPVASSPGSSVQQIGLSVPVIIIKQEEACQCQCACRDSAKERASSRRKGCSSPPPPEPSPQAPDGPSLQLPAQTFSSAPVPGSSSSTLPSSCEQSRQAETPSDPQTETLSAMDVSEFLSLQSLDTPSNLIPIEALLQGEEEMGLTSSFSK.

At glycine 2 the chain carries N-acetylglycine. Serine 5 carries the post-translational modification Phosphoserine. Residues 133-138 (KRKEVK) carry the Nuclear localization signal motif. 6 C2H2-type zinc fingers span residues 140-164 (YQCT…QKTH), 170-194 (FVCN…VRVH), 200-224 (FECD…QRLH), 229-253 (FNCE…IRTH), 259-283 (FRCD…VRTH), and 289-313 (FFCP…MKGH). Phosphoserine is present on serine 305. Disordered regions lie at residues 308 to 328 (SHMK…QHNG), 395 to 466 (ESFN…ALLQ), and 648 to 715 (SRRK…LSAM). A compositionally biased stretch (polar residues) spans 408 to 417 (PPSTGNSASL). Over residues 655–666 (SPPPPEPSPQAP) the composition is skewed to pro residues. The span at 679 to 698 (SSAPVPGSSSSTLPSSCEQS) shows a compositional bias: low complexity. The segment covering 700-712 (QAETPSDPQTETL) has biased composition (polar residues).

Its subcellular location is the nucleus. It is found in the cytoplasm. Zinc-dependent transcriptional regulator of cellular adaption to conditions of exposure to heavy metals. Binds to metal responsive elements (MRE) in promoters and activates the transcription of metallothionein genes like metallothionein-2/MT2A. Also regulates the expression of metalloproteases in response to intracellular zinc and functions as a catabolic regulator of cartilages. The sequence is that of Metal regulatory transcription factor 1 (MTF1) from Homo sapiens (Human).